The primary structure comprises 519 residues: 2-isopropylmalate synthase (519 aa).

The Pyruvate carboxyltransferase domain occupies 12–274; that stretch reads VVIFDTTLRD…WCNVESTMLT (263 aa). Residues D21, H209, H211, and N245 each coordinate Mn(2+). The interval 398–519 is regulatory domain; sequence KLSSLTVIAG…QRDVPAAAAS (122 aa).

It belongs to the alpha-IPM synthase/homocitrate synthase family. LeuA type 1 subfamily. As to quaternary structure, homodimer. Mn(2+) serves as cofactor.

The protein resides in the cytoplasm. It catalyses the reaction 3-methyl-2-oxobutanoate + acetyl-CoA + H2O = (2S)-2-isopropylmalate + CoA + H(+). The protein operates within amino-acid biosynthesis; L-leucine biosynthesis; L-leucine from 3-methyl-2-oxobutanoate: step 1/4. In terms of biological role, catalyzes the condensation of the acetyl group of acetyl-CoA with 3-methyl-2-oxobutanoate (2-ketoisovalerate) to form 3-carboxy-3-hydroxy-4-methylpentanoate (2-isopropylmalate). This is 2-isopropylmalate synthase from Nitrobacter winogradskyi (strain ATCC 25391 / DSM 10237 / CIP 104748 / NCIMB 11846 / Nb-255).